The sequence spans 111 residues: uncharacterized protein (111 aa).

Transmembrane regions (helical) follow at residues 7 to 29 (LYSS…RALY) and 49 to 71 (PSLL…SINL).

It is found in the membrane. This is an uncharacterized protein from Saccharomyces cerevisiae (strain ATCC 204508 / S288c) (Baker's yeast).